Reading from the N-terminus, the 277-residue chain is NH(3)-dependent NAD(+) synthetase (277 aa).

Position 47-54 (G47–S54) interacts with ATP. D53 is a binding site for Mg(2+). R141 is a binding site for deamido-NAD(+). T161 contacts ATP. A Mg(2+)-binding site is contributed by E166. Positions 174 and 181 each coordinate deamido-NAD(+). ATP contacts are provided by K190 and T212. H261 to K262 is a deamido-NAD(+) binding site.

This sequence belongs to the NAD synthetase family. In terms of assembly, homodimer.

It carries out the reaction deamido-NAD(+) + NH4(+) + ATP = AMP + diphosphate + NAD(+) + H(+). It participates in cofactor biosynthesis; NAD(+) biosynthesis; NAD(+) from deamido-NAD(+) (ammonia route): step 1/1. Catalyzes the ATP-dependent amidation of deamido-NAD to form NAD. Uses ammonia as a nitrogen source. This chain is NH(3)-dependent NAD(+) synthetase, found in Lactobacillus gasseri (strain ATCC 33323 / DSM 20243 / BCRC 14619 / CIP 102991 / JCM 1131 / KCTC 3163 / NCIMB 11718 / NCTC 13722 / AM63).